A 722-amino-acid polypeptide reads, in one-letter code: Transmembrane channel-like protein 8 (722 aa).

The tract at residues 1–21 is disordered; the sequence is MFRQWSVQSGPAPRRPESQAA. At 1–118 the chain is on the cytoplasmic side; it reads MFRQWSVQSG…GIQSYFTFLR (118 aa). Phosphoserine occurs at positions 6 and 18. A helical transmembrane segment spans residues 119–139; it reads FLLLLNLLTMLLTACFVLLPL. The Lumenal portion of the chain corresponds to 140 to 204; it reads VWLRPPELGP…AGPESSSEYS (65 aa). Asparagine 184 carries N-linked (GlcNAc...) asparagine glycosylation. Residues 205-225 form a helical membrane-spanning segment; it reads IRLAYLLSPMVCLLLCFCGIL. Residues 226–307 are Cytoplasmic-facing; that stretch reads QRMAEGLPQQ…CRLLTYLRTN (82 aa). Residues 308–328 traverse the membrane as a helical segment; the sequence is ILIVLLVVGAISAIFWATKYS. The Lumenal portion of the chain corresponds to 329–375; the sequence is QDNKEESLFLVLQYLPPGVISLVNFLGPQLFTVLIQLENYPPGTEVN. The interval 366–534 is TMC domain; sequence ENYPPGTEVN…SPRRFRASSS (169 aa). Asparagine 375 carries N-linked (GlcNAc...) asparagine glycosylation. Residues 376 to 396 form a helical membrane-spanning segment; the sequence is LTLIWCVVLKLASLGMFSFSL. At 397-430 the chain is on the cytoplasmic side; the sequence is GQTVLCIGRNKTSCESYGYNACDYQCWENSVGEE. A helical transmembrane segment spans residues 431–451; it reads LYKLIIFNFLLTVAFAFLVSL. Over 452–492 the chain is Lumenal; sequence PRRLLVERFSGWFWTWLDREEFLVPKNVLDIVAAQTVTWMG. A helical transmembrane segment spans residues 493–513; sequence LFYCPLLPLLNSVFLFLTFYI. At 514–536 the chain is on the cytoplasmic side; the sequence is KKYTLLRNSRASPRRFRASSSTF. The chain crosses the membrane as a helical span at residues 537–557; the sequence is FFHLVLLLGLLLAAVPLAYVI. Over 558-598 the chain is Lumenal; sequence SSTHSSWDCGLFTNYSAPWQVVPELVALQLPLPSQRALRYL. Asparagine 571 carries N-linked (GlcNAc...) asparagine glycosylation. A helical transmembrane segment spans residues 599–619; sequence SSHAFSFPLLILLSIVLTVCI. Over 620 to 722 the chain is Cytoplasmic; the sequence is SQSRANARAI…RFHFPSRTEL (103 aa). 3 positions are modified to phosphoserine: serine 658, serine 663, and serine 673. The disordered stretch occupies residues 658 to 722; that stretch reads SPEPGSPHSR…RFHFPSRTEL (65 aa). A compositionally biased stretch (pro residues) spans 678-687; the sequence is FPCPGSPGPR. Residues 689–712 show a composition bias toward low complexity; it reads PRLAPSNRLSSSSLGAPSASVPAS. Serine 698 carries the phosphoserine modification.

The protein belongs to the TMC family. Interacts with TMC6. Interacts and forms a complex with TMC6 and CIB1; the interaction stabilizes each component of the complex. Interacts and forms a complex with TMC6 and SLC30A1/ZNT1; the interaction regulates zinc transport into the ER. Interacts with TRADD; the interaction competes with TRADD/RIPK1/TRAF2/cIAPs complex I formation and facilites complex II formation. As to expression, expressed in thymus, lung, prostate, placenta, testis and spleen. Expressed in lymphocytes and peripheral lymphocytes.

The protein resides in the endoplasmic reticulum membrane. Its subcellular location is the golgi apparatus membrane. It localises to the nucleus membrane. Functionally, acts as a regulatory protein involved in the regulation of numerous cellular processes. Together with its homolog TMC6/EVER1, forms a complex with calcium-binding protein CIB1 in lymphocytes and keratynocytes where TMC6 and TMC8 stabilize CIB1 levels and reciprocally. Together with TMC6, also forms a complex with and activates zinc transporter ZNT1 at the ER membrane of keratynocytes, thereby facilitating zinc uptake into the ER. Also inhibits receptor-mediated calcium release from ER stores and calcium activated and volume regulated chloride channels. Down-regulates the activity of transcription factors induced by zinc and cytokines. Also sequesters TRADD which impairs the recruitment of TRAF2 and RIPK1 in the pro-survival complex I and promotes proapoptotic complex II formation, and may therefore be involved in TNF-induced cell death/survival decisions. The polypeptide is Transmembrane channel-like protein 8 (Mus musculus (Mouse)).